A 31-amino-acid polypeptide reads, in one-letter code: Cytochrome b6-f complex subunit 6 (31 aa).

A helical transmembrane segment spans residues 4-24; sequence VIAYLGLLASVLIGTIVIYLG.

This sequence belongs to the PetL family. As to quaternary structure, the 4 large subunits of the cytochrome b6-f complex are cytochrome b6, subunit IV (17 kDa polypeptide, PetD), cytochrome f and the Rieske protein, while the 4 small subunits are PetG, PetL, PetM and PetN. The complex functions as a dimer.

The protein resides in the plastid. It is found in the chloroplast thylakoid membrane. In terms of biological role, component of the cytochrome b6-f complex, which mediates electron transfer between photosystem II (PSII) and photosystem I (PSI), cyclic electron flow around PSI, and state transitions. PetL is important for photoautotrophic growth as well as for electron transfer efficiency and stability of the cytochrome b6-f complex. The sequence is that of Cytochrome b6-f complex subunit 6 from Oltmannsiellopsis viridis (Marine flagellate).